Reading from the N-terminus, the 175-residue chain is Riboflavin kinase (175 aa).

Residue 54–59 (GLGEGK) coordinates CDP. 2 residues coordinate Mg(2+): Thr-83 and Asn-85. FMN is bound by residues Thr-142 and Glu-150. CDP is bound at residue 155-158 (FHLR).

This sequence belongs to the archaeal riboflavin kinase family. It depends on Mg(2+) as a cofactor.

The enzyme catalyses riboflavin + CTP = CDP + FMN + H(+). Its pathway is cofactor biosynthesis; FMN biosynthesis; FMN from riboflavin (CTP route): step 1/1. Functionally, catalyzes the CTP-dependent phosphorylation of riboflavin (vitamin B2) to form flavin mononucleotide (FMN). This chain is Riboflavin kinase, found in Saccharolobus solfataricus (strain ATCC 35092 / DSM 1617 / JCM 11322 / P2) (Sulfolobus solfataricus).